The primary structure comprises 313 residues: Ornithine carbamoyltransferase (313 aa).

Carbamoyl phosphate-binding positions include 57–60, Gln84, Arg108, and 135–138; these read STRT and HPTQ. L-ornithine-binding positions include Asn167, Asp231, and 235–236; that span reads SM. Residues 272-273 and Arg300 contribute to the carbamoyl phosphate site; that span reads CL.

It belongs to the aspartate/ornithine carbamoyltransferase superfamily. OTCase family.

The protein resides in the cytoplasm. The enzyme catalyses carbamoyl phosphate + L-ornithine = L-citrulline + phosphate + H(+). It participates in amino-acid biosynthesis; L-arginine biosynthesis; L-arginine from L-ornithine and carbamoyl phosphate: step 1/3. Its function is as follows. Reversibly catalyzes the transfer of the carbamoyl group from carbamoyl phosphate (CP) to the N(epsilon) atom of ornithine (ORN) to produce L-citrulline. The polypeptide is Ornithine carbamoyltransferase (Pseudothermotoga lettingae (strain ATCC BAA-301 / DSM 14385 / NBRC 107922 / TMO) (Thermotoga lettingae)).